The primary structure comprises 344 residues: MKTLLKNRELSAFFAIVALFVVLVALNPAYFILQTLAMIFASSQILCLLALGATLVMLTRNIDVSVGSTVGLCAIAVGVALNYGYGLATAIAFALAIGALAGAFNGLLVVGLRIPAIVATLGTLGLYRGVMLLWTGGKWIEGLPDSLKSLSEPAFIGVSPLGWLVLALLLAGGWLLSRTAFGRDFYAVGDNLAAARQLGVAVNRTRMLAFTLNGMLAACAGIVFAAQIGFVPNQTGSGLEMKAIAACVLGGISLLGGTGTLLGAFLGAFFLTQIDTVLVLFRLPAWWNDFIAGLVLLGVLVLDGRLRQALARHQRALKYSRFQPGNKGSKQVARFPERKSKEVA.

The next 9 membrane-spanning stretches (helical) occupy residues 13-33 (FFAI…YFIL), 38-58 (MIFA…LVML), 69-89 (TVGL…GLAT), 90-110 (AIAF…LLVV), 114-134 (IPAI…MLLW), 155-175 (FIGV…GGWL), 212-232 (LNGM…GFVP), 251-271 (GISL…AFFL), and 283-303 (LPAW…LVLD). The tract at residues 323–344 (QPGNKGSKQVARFPERKSKEVA) is disordered. The span at 335 to 344 (FPERKSKEVA) shows a compositional bias: basic and acidic residues.

Belongs to the binding-protein-dependent transport system permease family. AraH/RbsC subfamily. As to quaternary structure, the complex is composed of two ATP-binding proteins (LsrA), two transmembrane proteins (LsrC and LsrD) and a solute-binding protein (LsrB).

The protein localises to the cell inner membrane. Part of the ABC transporter complex LsrABCD involved in autoinducer 2 (AI-2) import. Probably responsible for the translocation of the substrate across the membrane. The protein is Autoinducer 2 import system permease protein LsrC (lsrC) of Klebsiella pneumoniae subsp. pneumoniae (strain ATCC 700721 / MGH 78578).